Here is a 470-residue protein sequence, read N- to C-terminus: 3-isopropylmalate dehydratase large subunit (470 aa).

The [4Fe-4S] cluster site is built by C348, C409, and C412.

This sequence belongs to the aconitase/IPM isomerase family. LeuC type 1 subfamily. In terms of assembly, heterodimer of LeuC and LeuD. The cofactor is [4Fe-4S] cluster.

It catalyses the reaction (2R,3S)-3-isopropylmalate = (2S)-2-isopropylmalate. The protein operates within amino-acid biosynthesis; L-leucine biosynthesis; L-leucine from 3-methyl-2-oxobutanoate: step 2/4. Catalyzes the isomerization between 2-isopropylmalate and 3-isopropylmalate, via the formation of 2-isopropylmaleate. The protein is 3-isopropylmalate dehydratase large subunit of Acidithiobacillus ferrooxidans (strain ATCC 23270 / DSM 14882 / CIP 104768 / NCIMB 8455) (Ferrobacillus ferrooxidans (strain ATCC 23270)).